The primary structure comprises 463 residues: GTPase Der (463 aa).

EngA-type G domains lie at 27–190 and 200–373; these read PVVA…PEVG and RRVA…ASWD. GTP contacts are provided by residues 33-40, 80-84, 142-145, 206-213, 253-257, and 318-321; these read GRPNVGKS, DTGGW, NKVD, GKPNVGKS, DTAGL, and NKWD. A KH-like domain is found at 374–456; the sequence is TRIATGPLNT…PIRVNVRVRE (83 aa).

The protein belongs to the TRAFAC class TrmE-Era-EngA-EngB-Septin-like GTPase superfamily. EngA (Der) GTPase family. Associates with the 50S ribosomal subunit.

Functionally, GTPase that plays an essential role in the late steps of ribosome biogenesis. This Mycobacterium bovis (strain ATCC BAA-935 / AF2122/97) protein is GTPase Der.